Reading from the N-terminus, the 226-residue chain is Prolactin (226 aa).

The signal sequence occupies residues 1-29 (MNSQGSAQKAGTLLLLLISNLLFCQNVQP). C33 and C38 are disulfide-bonded. Phosphoserine is present on residues S53 and S117. 2 cysteine pairs are disulfide-bonded: C85–C201 and C218–C226.

This sequence belongs to the somatotropin/prolactin family. In terms of assembly, interacts with PRLR.

The protein resides in the secreted. Its function is as follows. Prolactin acts primarily on the mammary gland by promoting lactation. This is Prolactin (Prl) from Mus musculus (Mouse).